We begin with the raw amino-acid sequence, 370 residues long: tRNA-specific 2-thiouridylase MnmA (370 aa).

Residues 9–16 (GMSGGVDS) and M35 contribute to the ATP site. Residues 95-97 (NPD) form an interaction with target base in tRNA region. The Nucleophile role is filled by C100. An intrachain disulfide couples C100 to C196. ATP is bound at residue G124. The interval 146-148 (KDQ) is interaction with tRNA. C196 serves as the catalytic Cysteine persulfide intermediate. Residues 308–309 (RY) are interaction with tRNA.

This sequence belongs to the MnmA/TRMU family.

The protein resides in the cytoplasm. The catalysed reaction is S-sulfanyl-L-cysteinyl-[protein] + uridine(34) in tRNA + AH2 + ATP = 2-thiouridine(34) in tRNA + L-cysteinyl-[protein] + A + AMP + diphosphate + H(+). Its function is as follows. Catalyzes the 2-thiolation of uridine at the wobble position (U34) of tRNA, leading to the formation of s(2)U34. This chain is tRNA-specific 2-thiouridylase MnmA, found in Ralstonia nicotianae (strain ATCC BAA-1114 / GMI1000) (Ralstonia solanacearum).